The following is a 488-amino-acid chain: Aspartyl/glutamyl-tRNA(Asn/Gln) amidotransferase subunit B (488 aa).

Belongs to the GatB/GatE family. GatB subfamily. As to quaternary structure, heterotrimer of A, B and C subunits.

The enzyme catalyses L-glutamyl-tRNA(Gln) + L-glutamine + ATP + H2O = L-glutaminyl-tRNA(Gln) + L-glutamate + ADP + phosphate + H(+). The catalysed reaction is L-aspartyl-tRNA(Asn) + L-glutamine + ATP + H2O = L-asparaginyl-tRNA(Asn) + L-glutamate + ADP + phosphate + 2 H(+). Its function is as follows. Allows the formation of correctly charged Asn-tRNA(Asn) or Gln-tRNA(Gln) through the transamidation of misacylated Asp-tRNA(Asn) or Glu-tRNA(Gln) in organisms which lack either or both of asparaginyl-tRNA or glutaminyl-tRNA synthetases. The reaction takes place in the presence of glutamine and ATP through an activated phospho-Asp-tRNA(Asn) or phospho-Glu-tRNA(Gln). In Neorickettsia sennetsu (strain ATCC VR-367 / Miyayama) (Ehrlichia sennetsu), this protein is Aspartyl/glutamyl-tRNA(Asn/Gln) amidotransferase subunit B.